We begin with the raw amino-acid sequence, 240 residues long: Eukaryotic translation initiation factor 4E-2 (240 aa).

The disordered stretch occupies residues 1-29; the sequence is MVVMDSPVSGRMADQNIDPNTTTSPSPIE. The segment covering 17–26 has biased composition (polar residues); that stretch reads IDPNTTTSPS. EIF4G-binding regions lie at residues 65 to 68 and 75 to 111; these read HCFQ and FDNP…NNIH. Residues 83–88, lysine 115, and 133–134 each bind mRNA; these read NQVIWG and WE. Cysteine 138 and cysteine 176 are joined by a disulfide. Residues 159 to 168 form an EIF4G-binding region; sequence NTLLALVGEQ. MRNA contacts are provided by residues 183-188 and 228-232; these read RTRGDR and KTLDR.

Belongs to the eukaryotic initiation factor 4E family. As to quaternary structure, EIF4F is a multi-subunit complex, the composition of which varies with external and internal environmental conditions. It is composed of at least EIF4A, EIF4E and EIF4G. EIF4E is also known to interact with other partners. In higher plants two isoforms of EIF4F have been identified, named isoform EIF4F and isoform EIF(iso)4F. Isoform EIF4F has subunits p220 and p26, whereas isoform EIF(iso)4F has subunits p82 and p28. According to the redox status, the Cys-138-Cys-176 disulfide bridge may have a role in regulating protein function by affecting its ability to bind capped mRNA.

Its subcellular location is the nucleus. It is found in the cytoplasm. Component of the protein complex eIF4F, which is involved in the recognition of the mRNA cap, ATP-dependent unwinding of 5'-terminal secondary structure and recruitment of mRNA to the ribosome. Recognizes and binds the 7-methylguanosine-containing mRNA cap during an early step in the initiation of protein synthesis and facilitates ribosome binding by inducing the unwinding of the mRNAs secondary structures. In Arabidopsis thaliana (Mouse-ear cress), this protein is Eukaryotic translation initiation factor 4E-2.